We begin with the raw amino-acid sequence, 200 residues long: A-type ATP synthase subunit E (200 aa).

Belongs to the V-ATPase E subunit family. Has multiple subunits with at least A(3), B(3), C, D, E, F, H, I and proteolipid K(x).

The protein resides in the cell membrane. Functionally, component of the A-type ATP synthase that produces ATP from ADP in the presence of a proton gradient across the membrane. This Methanopyrus kandleri (strain AV19 / DSM 6324 / JCM 9639 / NBRC 100938) protein is A-type ATP synthase subunit E.